We begin with the raw amino-acid sequence, 521 residues long: Bifunctional purine biosynthesis protein PurH (521 aa).

The region spanning Met1–Val147 is the MGS-like domain.

This sequence belongs to the PurH family.

It catalyses the reaction (6R)-10-formyltetrahydrofolate + 5-amino-1-(5-phospho-beta-D-ribosyl)imidazole-4-carboxamide = 5-formamido-1-(5-phospho-D-ribosyl)imidazole-4-carboxamide + (6S)-5,6,7,8-tetrahydrofolate. It carries out the reaction IMP + H2O = 5-formamido-1-(5-phospho-D-ribosyl)imidazole-4-carboxamide. It participates in purine metabolism; IMP biosynthesis via de novo pathway; 5-formamido-1-(5-phospho-D-ribosyl)imidazole-4-carboxamide from 5-amino-1-(5-phospho-D-ribosyl)imidazole-4-carboxamide (10-formyl THF route): step 1/1. It functions in the pathway purine metabolism; IMP biosynthesis via de novo pathway; IMP from 5-formamido-1-(5-phospho-D-ribosyl)imidazole-4-carboxamide: step 1/1. The polypeptide is Bifunctional purine biosynthesis protein PurH (Geotalea daltonii (strain DSM 22248 / JCM 15807 / FRC-32) (Geobacter daltonii)).